Reading from the N-terminus, the 370-residue chain is Mesoderm posterior protein 2 (370 aa).

Disordered stretches follow at residues Pro-51–Lys-89, Ser-231–Gln-265, and Thr-325–Leu-350. Low complexity predominate over residues Pro-57–Ala-77. The 55-residue stretch at Gly-79–Leu-133 folds into the bHLH domain. Polar residues predominate over residues Thr-325–Ala-334. Residues Ser-326–Gly-330 are may contain a degradation domain.

In terms of processing, degraded by the proteasome. Phosphorylated.

Its subcellular location is the nucleus. Functionally, transcription factor with important role in somitogenesis. Defines the rostrocaudal patterning of the somite by participating in distinct Notch pathways. Also regulates the FGF signaling pathway. Specifies the rostral half of the somites. Generates rostro-caudal polarity of somites by down-regulating in the presumptive rostral domain DLL1, a Notch ligand. Participates in the segment border formation by activating in the anterior presomitic mesoderm LFNG, a negative regulator of DLL1-Notch signaling. Acts as a strong suppressor of Notch activity. Together with MESP1 is involved in the epithelialization of somitic mesoderm and in the development of cardiac mesoderm. May play a role with Tcf15 in the differentiation of myotomal and sclerotomal cells by regulating Pax family genes. Also controls the expression of the protocadherin PCDH8/PAPC, EPHA4, RIPPLY2, NOTCH2, FGFR1, and CER1. Binds to the E-boxes within the EPH4A and RIPPLY2 enhancers. The sequence is that of Mesoderm posterior protein 2 (Mesp2) from Mus musculus (Mouse).